The sequence spans 186 residues: Adenylate kinase (186 aa).

10-15 (GVGKGT) is a binding site for ATP. Positions 30–59 (STGDIFRYNIKNKTELGLEAMSYTDKGELV) are NMP. AMP is bound by residues Thr-31, Arg-36, 57–59 (ELV), 85–88 (GYPR), and Gln-92. The segment at 126–136 (KRAAEQGRADD) is LID. Position 127 (Arg-127) interacts with ATP. 2 residues coordinate AMP: Arg-133 and Arg-144. Gly-172 is an ATP binding site.

It belongs to the adenylate kinase family. Monomer.

Its subcellular location is the cytoplasm. It carries out the reaction AMP + ATP = 2 ADP. It functions in the pathway purine metabolism; AMP biosynthesis via salvage pathway; AMP from ADP: step 1/1. Its function is as follows. Catalyzes the reversible transfer of the terminal phosphate group between ATP and AMP. Plays an important role in cellular energy homeostasis and in adenine nucleotide metabolism. The sequence is that of Adenylate kinase from Bifidobacterium longum (strain NCC 2705).